Consider the following 199-residue polypeptide: MADTHRVDRTDRHFQFQSPYEGGRGQGQYEGDRGYGGGGYKSMMPESGPSSTQVLSLLIGVPVVGSLLALAGLLLAGSVIGLMVALPLFLLFSPVIVPAALTIGLAMTGFLASGMFGLTGLSSISWVMNYLRGTRRTVPEQLEYAKRRMADAVGYAGQKGKEMGQHVQNKAQDVKQYDISKPHDTTTKGHETQGRTTAA.

Residues 1–14 show a composition bias toward basic and acidic residues; the sequence is MADTHRVDRTDRHF. Residues 1-31 form a disordered region; sequence MADTHRVDRTDRHFQFQSPYEGGRGQGQYEG. A2 is modified (N-acetylalanine). Positions 2-56 are polar; that stretch reads ADTHRVDRTDRHFQFQSPYEGGRGQGQYEGDRGYGGGGYKSMMPESGPSSTQVLS. The span at 22–31 shows a compositional bias: gly residues; the sequence is GGRGQGQYEG. Transmembrane regions (helical) follow at residues 51–71, 72–92, and 96–116; these read STQV…LALA, GLLL…FLLF, and IVPA…SGMF. Residues 57–128 are hydrophobic; the sequence is LLIGVPVVGS…TGLSSISWVM (72 aa). Residues 159 to 199 form a disordered region; sequence KGKEMGQHVQNKAQDVKQYDISKPHDTTTKGHETQGRTTAA. Over residues 172 to 193 the composition is skewed to basic and acidic residues; the sequence is QDVKQYDISKPHDTTTKGHETQ.

The protein belongs to the oleosin family.

The protein localises to the lipid droplet. It localises to the membrane. Functionally, may have a structural role to stabilize the lipid body during desiccation of the seed by preventing coalescence of the oil. Probably interacts with both lipid and phospholipid moieties of lipid bodies. May also provide recognition signals for specific lipase anchorage in lipolysis during seedling growth. The polypeptide is Oleosin 21.2 kDa (Arabidopsis thaliana (Mouse-ear cress)).